Consider the following 454-residue polypeptide: tRNA-2-methylthio-N(6)-dimethylallyladenosine synthase (454 aa).

The MTTase N-terminal domain maps to Arg6–Asp122. [4Fe-4S] cluster-binding residues include Cys15, Cys51, Cys85, Cys157, Cys161, and Cys164. Positions Arg143–Arg381 constitute a Radical SAM core domain. In terms of domain architecture, TRAM spans Gln383 to Glu447.

It belongs to the methylthiotransferase family. MiaB subfamily. In terms of assembly, monomer. [4Fe-4S] cluster is required as a cofactor.

It localises to the cytoplasm. The enzyme catalyses N(6)-dimethylallyladenosine(37) in tRNA + (sulfur carrier)-SH + AH2 + 2 S-adenosyl-L-methionine = 2-methylsulfanyl-N(6)-dimethylallyladenosine(37) in tRNA + (sulfur carrier)-H + 5'-deoxyadenosine + L-methionine + A + S-adenosyl-L-homocysteine + 2 H(+). Its function is as follows. Catalyzes the methylthiolation of N6-(dimethylallyl)adenosine (i(6)A), leading to the formation of 2-methylthio-N6-(dimethylallyl)adenosine (ms(2)i(6)A) at position 37 in tRNAs that read codons beginning with uridine. This chain is tRNA-2-methylthio-N(6)-dimethylallyladenosine synthase, found in Nostoc punctiforme (strain ATCC 29133 / PCC 73102).